Consider the following 1416-residue polypeptide: DNA-directed RNA polymerase subunit beta (1416 aa).

Residues 1388-1416 are disordered; the sequence is AKAAREQAEGELGGPLGTPRGAAAEKNTA.

Belongs to the RNA polymerase beta chain family. The RNAP catalytic core consists of 2 alpha, 1 beta, 1 beta' and 1 omega subunit. When a sigma factor is associated with the core the holoenzyme is formed, which can initiate transcription.

The catalysed reaction is RNA(n) + a ribonucleoside 5'-triphosphate = RNA(n+1) + diphosphate. Its function is as follows. DNA-dependent RNA polymerase catalyzes the transcription of DNA into RNA using the four ribonucleoside triphosphates as substrates. This Anaeromyxobacter sp. (strain Fw109-5) protein is DNA-directed RNA polymerase subunit beta.